Here is a 199-residue protein sequence, read N- to C-terminus: 3-isopropylmalate dehydratase small subunit (199 aa).

The protein belongs to the LeuD family. LeuD type 1 subfamily. Heterodimer of LeuC and LeuD.

The catalysed reaction is (2R,3S)-3-isopropylmalate = (2S)-2-isopropylmalate. Its pathway is amino-acid biosynthesis; L-leucine biosynthesis; L-leucine from 3-methyl-2-oxobutanoate: step 2/4. In terms of biological role, catalyzes the isomerization between 2-isopropylmalate and 3-isopropylmalate, via the formation of 2-isopropylmaleate. This is 3-isopropylmalate dehydratase small subunit from Bacillus licheniformis (strain ATCC 14580 / DSM 13 / JCM 2505 / CCUG 7422 / NBRC 12200 / NCIMB 9375 / NCTC 10341 / NRRL NRS-1264 / Gibson 46).